The chain runs to 77 residues: Membrane-associated ATPase epsilon chain (77 aa).

The protein to E.hirae NtpH. Sul-ATPase is composed of six (or maybe five) subunits: alpha, beta, delta, gamma, C (proteolipid), and possibly epsilon.

The catalysed reaction is ATP + H2O + 4 H(+)(in) = ADP + phosphate + 5 H(+)(out). In Sulfolobus acidocaldarius (strain ATCC 33909 / DSM 639 / JCM 8929 / NBRC 15157 / NCIMB 11770), this protein is Membrane-associated ATPase epsilon chain (atpE).